Here is a 681-residue protein sequence, read N- to C-terminus: METMQSRTYAGLTKLNTTTALLNKKDGNDDDKAEHSKRSGYHGLSPLDALALKHRDLNRKLNLRAMMSKSEDNLQILKETTSGSSSDLLNIESPASPAEASSPFTVRTPTVHDPEHYFVAQKLSSVFGTPDLEDETDFFDYFSAAPDVHPNDIFDSYNSNNIAESFDDDNYYNSLLPPNAPYYHEIEPPRTASNTSPTPNSIKSAHPAEPPKRPAFTRSATSPDKILPTRIKSKDTVSSGDSTPLSGSSSSKGMLMSMSTSENHSLSSNPELSNSNLLAKNESPADVSNNESGNESSKEPDKEHSTPIHPTTPVSRCARPSSRQQTISILQAQSPFLKKSDKERANLNKTMVSINKSINIHQSIHEISCPHHSSSDNCLFILISLMDRLHSPVLKQLDVSLQSLTMTAIRYIDLNYVDVQYTNLRGGAYGNGNNSESSDNAQLKKEEHLNLAIHFHLLNDHDKCFWHTGMASSYEDYTATFIYGLYLRHGLACSPKTHVSFLFLLKTATQLLNKLVECLHSSDLGLNDTTPNEKLSTEYNQQRLLLALILYELGVCFMHGWGITRDRYLALHLIKLSGAWGDADAQFEAGLQMSLGAVSDKDSHMAAYYYRLAGFQGISPPSKCKWVYKSKYSLAANHKVPAASEVAYVSAIVENLESHSLKFSTKPKAKLRSLITSVRYL.

Residues 22–43 (LNKKDGNDDDKAEHSKRSGYHG) are disordered. Over residues 23 to 37 (NKKDGNDDDKAEHSK) the composition is skewed to basic and acidic residues. The residue at position 70 (Ser70) is a Phosphoserine. 2 disordered regions span residues 80–104 (TTSG…SSPF) and 182–324 (YYHE…SSRQ). Over residues 92–103 (ESPASPAEASSP) the composition is skewed to low complexity. Residues 191 to 203 (TASNTSPTPNSIK) show a composition bias toward polar residues. Ser196 is modified (phosphoserine). Low complexity predominate over residues 238-278 (SSGDSTPLSGSSSSKGMLMSMSTSENHSLSSNPELSNSNLL). Residues 296–306 (SSKEPDKEHST) show a composition bias toward basic and acidic residues. Sel1-like repeat units follow at residues 547–582 (ALIL…AWGD) and 583–618 (ADAQ…FQGI).

It localises to the cytoplasm. Functions as a negative regulator of mitosis. It interacts with the C-terminal of nim1, thereby inhibiting its kinase activity which phosphorylates wee1. This Schizosaccharomyces pombe (strain 972 / ATCC 24843) (Fission yeast) protein is Mitosis inhibitor nif1 (nif1).